A 406-amino-acid chain; its full sequence is Peptidase T (406 aa).

His82 provides a ligand contact to Zn(2+). Asp84 is an active-site residue. Asp142 is a Zn(2+) binding site. Catalysis depends on Glu176, which acts as the Proton acceptor. 3 residues coordinate Zn(2+): Glu177, Asp199, and His381.

Belongs to the peptidase M20B family. Zn(2+) serves as cofactor.

Its subcellular location is the cytoplasm. It catalyses the reaction Release of the N-terminal residue from a tripeptide.. Functionally, cleaves the N-terminal amino acid of tripeptides. This chain is Peptidase T, found in Streptococcus agalactiae serotype Ia (strain ATCC 27591 / A909 / CDC SS700).